Here is a 632-residue protein sequence, read N- to C-terminus: Palmitoyltransferase ZDHHC17 (632 aa).

The Cytoplasmic portion of the chain corresponds to 1-304 (MQREEGFNTK…LKADKEFRQK (304 aa)). The tract at residues 11 to 305 (MADGPDEYET…KADKEFRQKV (295 aa)) is necessary and sufficient for interaction with DNAJC5 and SNAP25. 7 ANK repeats span residues 51 to 86 (THIDDYSTWDIVKATQYGIYERCRELVEAGYDVRQP), 89 to 118 (ENVTLLHWAAINNRIDLVKYYISKGAIVDQ), 123 to 152 (LNSTPLHWATRQGHLSMVVQLMKYGADPSL), 156 to 185 (EGCSCIHLAAQFGHTSIVAYLIAKGQDVDM), 189 to 219 (NGMTPLMWAAYRTHSVDPTRLLLTFNVSVNL), 224 to 253 (HKNTALHWAVLAGNTTVISLLLEAGGNVDA), and 257 to 286 (KGESALDLAKQRKNVWMINHLQEARQAKGY). 2 consecutive transmembrane segments (helical) span residues 305-325 (VMLGTPFLVIWLVGFIADLDI) and 326-346 (DSWLIKGLMYGGVWATVQFLS). Topologically, residues 347–357 (KSFFDHSMHSA) are cytoplasmic. Residues 358–378 (LPLGIYLATKFWMYVTWFFWF) form a helical membrane-spanning segment. Over 379–381 (WND) the chain is Lumenal. A helical transmembrane segment spans residues 382-402 (LNFLFIHLPFLANSVALFYNF). Residues 403–480 (GKSWKSDPGI…GNCVGAGNHR (78 aa)) are Cytoplasmic-facing. The DHHC domain maps to 437 to 487 (IFCSTCLIRKPVRSKHCGVCNRCIAKFDHHCPWVGNCVGAGNHRYFMGYLF). The S-palmitoyl cysteine intermediate role is filled by cysteine 467. A helical membrane pass occupies residues 481-501 (YFMGYLFFLLFMICWMIYGCV). Over 502–529 (SYWGLHCETTYTKDGFWTYITQIATCSP) the chain is Lumenal. A helical membrane pass occupies residues 530–550 (WMFWMFLNSVFHFLWVAVLLM). Topologically, residues 551–632 (CQLYQITCLG…QISGSGYQLV (82 aa)) are cytoplasmic.

This sequence belongs to the DHHC palmitoyltransferase family. AKR/ZDHHC17 subfamily. Interacts (via ANK repeats) with numerous proteins (via the consensus sequence motif [VIAP]-[VIT]-x-x-Q-P). Interacts (via ANK repeats) with CLIP3. Interacts (via ANK repeats) with HTT. Interacts (via ANK repeats) with DNAJC5 (via C-terminus). Interacts (via ANK repeats) with MAP6. Interacts (via ANK repeats) with SNAP23. Interacts (via ANK repeats) with SNAP25. Interacts (via ANK repeats) with EVL. Interacts with SPRED1 and SPRED3. Interacts with GPM6A and OPTN. May interact (via ANK repeats) with SPRED2. May interact with NTRK1; may regulate its localization and function. Post-translationally, autopalmitoylated. Autopalmitoylation has a regulatory role in ZDHHC17-mediated Mg(2+) transport. As to expression, expressed in liver, testis, kidney, heart, pancreas and brain. Highest expression was seen in the brain. Localized predominantly in the perinuclear regions of neurons from the cortex, striatum and hippocampus. Colocalized with HTT in the medium spiny neurons of the striatum and the spiny neurons that project into the globus pallidus.

Its subcellular location is the golgi apparatus membrane. The protein localises to the cytoplasmic vesicle membrane. The protein resides in the presynaptic cell membrane. It catalyses the reaction L-cysteinyl-[protein] + hexadecanoyl-CoA = S-hexadecanoyl-L-cysteinyl-[protein] + CoA. It carries out the reaction L-cysteinyl-[protein] + tetradecanoyl-CoA = S-tetradecanoyl-L-cysteinyl-[protein] + CoA. The catalysed reaction is L-cysteinyl-[protein] + octadecanoyl-CoA = S-octadecanoyl-L-cysteinyl-[protein] + CoA. Palmitoyltransferase that catalyzes the addition of palmitate onto various protein substrates and is involved in a variety of cellular processes. Has no stringent fatty acid selectivity and in addition to palmitate can also transfer onto target proteins myristate from tetradecanoyl-CoA and stearate from octadecanoyl-CoA. Palmitoyltransferase specific for a subset of neuronal proteins, including SNAP25, DLG4/PSD95, GAD2, SYT1 and HTT. Also palmitoylates neuronal protein GPM6A as well as SPRED1 and SPRED3. Could also play a role in axonogenesis through the regulation of NTRK1 and the downstream ERK1/ERK2 signaling cascade. May be involved in the sorting or targeting of critical proteins involved in the initiating events of endocytosis at the plasma membrane. May play a role in Mg(2+) transport. Could also palmitoylate DNAJC5 and regulate its localization to the Golgi membrane. Palmitoylates CASP6, thereby preventing its dimerization and subsequent activation. The sequence is that of Palmitoyltransferase ZDHHC17 from Mus musculus (Mouse).